Here is a 906-residue protein sequence, read N- to C-terminus: Translation initiation factor IF-2 (906 aa).

3 disordered regions span residues 94–125 (APEKTEVIPEETENTVEESTAAETVESEPETA), 165–232 (ESEA…TGKK), and 270–321 (RQEQ…SSEV). Basic and acidic residues-rich tracts occupy residues 165 to 176 (ESEAEKGTEIEK), 222 to 232 (GPAEARETGKK), and 270 to 284 (RQEQKRREEAKKREA). Residues 299-313 (QQRRSLKRGGKRKKY) show a composition bias toward basic residues. The tr-type G domain occupies 405 to 574 (ERPPVITIMG…LLQAEMMELK (170 aa)). Residues 414 to 421 (GHVDHGKT) form a G1 region. Position 414–421 (414–421 (GHVDHGKT)) interacts with GTP. Residues 439-443 (GITQH) are G2. The segment at 460-463 (DTPG) is G3. GTP is bound by residues 460-464 (DTPGH) and 514-517 (NKMD). Positions 514-517 (NKMD) are G4. Residues 550–552 (SAH) form a G5 region.

This sequence belongs to the TRAFAC class translation factor GTPase superfamily. Classic translation factor GTPase family. IF-2 subfamily.

The protein localises to the cytoplasm. One of the essential components for the initiation of protein synthesis. Protects formylmethionyl-tRNA from spontaneous hydrolysis and promotes its binding to the 30S ribosomal subunits. Also involved in the hydrolysis of GTP during the formation of the 70S ribosomal complex. In Sulfurovum sp. (strain NBC37-1), this protein is Translation initiation factor IF-2.